The primary structure comprises 485 residues: uncharacterized protein (485 aa).

The next 11 membrane-spanning stretches (helical) occupy residues 79–99, 117–137, 139–159, 170–190, 199–219, 275–295, 313–333, 355–375, 380–400, 421–441, and 448–468; these read LVTL…LIFA, VFAL…FLVF, FFSG…LADL, VIYF…SGFI, WEFW…FLLL, ILIC…LVLI, GLMY…AMPI, LPMG…FGWT, IFWF…IMTS, GVKI…ESLF, and WGCT…PILF.

The protein belongs to the major facilitator superfamily. CAR1 family.

The protein resides in the membrane. This is an uncharacterized protein from Schizosaccharomyces pombe (strain 972 / ATCC 24843) (Fission yeast).